Consider the following 600-residue polypeptide: Aspartate--tRNA(Asp/Asn) ligase (600 aa).

Position 187 (E187) interacts with L-aspartate. Residues 211-214 form an aspartate region; sequence QIFK. L-aspartate is bound by residues R233 and H463. 233–235 contacts ATP; that stretch reads RDE. Residue E497 coordinates ATP. R504 contributes to the L-aspartate binding site. 549-552 contributes to the ATP binding site; the sequence is GVDR.

The protein belongs to the class-II aminoacyl-tRNA synthetase family. Type 1 subfamily. Homodimer.

The protein localises to the cytoplasm. It catalyses the reaction tRNA(Asx) + L-aspartate + ATP = L-aspartyl-tRNA(Asx) + AMP + diphosphate. Its function is as follows. Aspartyl-tRNA synthetase with relaxed tRNA specificity since it is able to aspartylate not only its cognate tRNA(Asp) but also tRNA(Asn). Reaction proceeds in two steps: L-aspartate is first activated by ATP to form Asp-AMP and then transferred to the acceptor end of tRNA(Asp/Asn). This Wolbachia pipientis subsp. Culex pipiens (strain wPip) protein is Aspartate--tRNA(Asp/Asn) ligase.